The sequence spans 368 residues: Biotin synthase (368 aa).

One can recognise a Radical SAM core domain in the interval 74-309 (CCGNVVDLCS…QQILRYAGGR (236 aa)). [4Fe-4S] cluster contacts are provided by Cys-92, Cys-96, and Cys-99. Residues Cys-137, Cys-174, Cys-234, and Arg-304 each coordinate [2Fe-2S] cluster.

It belongs to the radical SAM superfamily. Biotin synthase family. As to quaternary structure, homodimer. [4Fe-4S] cluster is required as a cofactor. [2Fe-2S] cluster serves as cofactor.

The catalysed reaction is (4R,5S)-dethiobiotin + (sulfur carrier)-SH + 2 reduced [2Fe-2S]-[ferredoxin] + 2 S-adenosyl-L-methionine = (sulfur carrier)-H + biotin + 2 5'-deoxyadenosine + 2 L-methionine + 2 oxidized [2Fe-2S]-[ferredoxin]. It participates in cofactor biosynthesis; biotin biosynthesis; biotin from 7,8-diaminononanoate: step 2/2. Catalyzes the conversion of dethiobiotin (DTB) to biotin by the insertion of a sulfur atom into dethiobiotin via a radical-based mechanism. This is Biotin synthase from Rippkaea orientalis (strain PCC 8801 / RF-1) (Cyanothece sp. (strain PCC 8801)).